A 455-amino-acid chain; its full sequence is Eukaryotic translation initiation factor 3 subunit E (455 aa).

A PCI domain is found at 256 to 425; that stretch reads TDLFFSPAYI…GTVIMNHPPQ (170 aa).

The protein belongs to the eIF-3 subunit E family. In terms of assembly, component of the eukaryotic translation initiation factor 3 (eIF-3) complex.

Its subcellular location is the cytoplasm. Its function is as follows. Component of the eukaryotic translation initiation factor 3 (eIF-3) complex, which is involved in protein synthesis of a specialized repertoire of mRNAs and, together with other initiation factors, stimulates binding of mRNA and methionyl-tRNAi to the 40S ribosome. The eIF-3 complex specifically targets and initiates translation of a subset of mRNAs involved in cell proliferation. The protein is Eukaryotic translation initiation factor 3 subunit E (int6) of Neosartorya fischeri (strain ATCC 1020 / DSM 3700 / CBS 544.65 / FGSC A1164 / JCM 1740 / NRRL 181 / WB 181) (Aspergillus fischerianus).